The following is a 181-amino-acid chain: GTP cyclohydrolase 1 2 (181 aa).

This sequence belongs to the GTP cyclohydrolase I family. Homomer.

The enzyme catalyses GTP + H2O = 7,8-dihydroneopterin 3'-triphosphate + formate + H(+). It functions in the pathway cofactor biosynthesis; 7,8-dihydroneopterin triphosphate biosynthesis; 7,8-dihydroneopterin triphosphate from GTP: step 1/1. In Pseudomonas syringae pv. tomato (strain ATCC BAA-871 / DC3000), this protein is GTP cyclohydrolase 1 2.